We begin with the raw amino-acid sequence, 149 residues long: Ribonuclease pancreatic (149 aa).

The first 25 residues, Met1–Gly25, serve as a signal peptide directing secretion. The interval Ala30–Thr49 is disordered. Substrate-binding residues include Lys32 and Arg35. His37 (proton acceptor) is an active-site residue. The span at Asp39 to Thr49 shows a compositional bias: polar residues. 4 disulfides stabilise this stretch: Cys51–Cys109, Cys65–Cys120, Cys83–Cys135, and Cys90–Cys97. Lys66–Thr70 is a substrate binding site. The N-linked (GlcNAc...) asparagine glycan is linked to Asn87. Lys91 lines the substrate pocket. His144 serves as the catalytic Proton donor.

It belongs to the pancreatic ribonuclease family. As to quaternary structure, monomer. Interacts with and forms tight 1:1 complexes with RNH1. Dimerization of two such complexes may occur. Interaction with RNH1 inhibits this protein. As to expression, pancreas.

It is found in the secreted. It carries out the reaction an [RNA] containing cytidine + H2O = an [RNA]-3'-cytidine-3'-phosphate + a 5'-hydroxy-ribonucleotide-3'-[RNA].. It catalyses the reaction an [RNA] containing uridine + H2O = an [RNA]-3'-uridine-3'-phosphate + a 5'-hydroxy-ribonucleotide-3'-[RNA].. Endonuclease that catalyzes the cleavage of RNA on the 3' side of pyrimidine nucleotides. Acts on single-stranded and double-stranded RNA. In Mus pahari (Gairdner's shrew-mouse), this protein is Ribonuclease pancreatic (Rnase1).